The sequence spans 177 residues: Large ribosomal subunit protein uL5 (177 aa).

The protein belongs to the universal ribosomal protein uL5 family. In terms of assembly, part of the 50S ribosomal subunit; contacts the 5S rRNA and probably tRNA. Forms a bridge to the 30S subunit in the 70S ribosome.

In terms of biological role, this is one of the proteins that bind and probably mediate the attachment of the 5S RNA into the large ribosomal subunit, where it forms part of the central protuberance. In the 70S ribosome it contacts protein S13 of the 30S subunit (bridge B1b), connecting the 2 subunits; this bridge is implicated in subunit movement. May contact the P site tRNA; the 5S rRNA and some of its associated proteins might help stabilize positioning of ribosome-bound tRNAs. The protein is Large ribosomal subunit protein uL5 of Sulfurisphaera tokodaii (strain DSM 16993 / JCM 10545 / NBRC 100140 / 7) (Sulfolobus tokodaii).